Consider the following 79-residue polypeptide: Panulirin (79 aa).

The first 22 residues, 1–22 (MKNKAVLMLMALFLVAVTQVHG), serve as a signal peptide directing secretion. A propeptide spanning residues 23-26 (DPEP) is cleaved from the precursor. Cystine bridges form between Cys33–Cys63, Cys40–Cys56, and Cys46–Cys64. The propeptide occupies 75-79 (QLLAA).

In terms of assembly, monomer. Contains 3 disulfide bonds. As to expression, expressed in hemocytes (at protein level).

Functionally, involved in the melanization cascade in response to lipopolysaccharide (LPS). In vitro, reversibly and competitively inhibits trypsin (Ki=8.6 nM) but not serine proteases chymotrypsin, elastase, subtilisin, thrombin and plasmin, cysteine peptidase papain or metallopeptidase carboxypeptidase A. The chain is Panulirin from Panulirus argus (Caribbean spiny lobster).